Here is a 377-residue protein sequence, read N- to C-terminus: UDP-N-acetylglucosamine 2-epimerase (377 aa).

Histidine 212 is a catalytic residue.

This sequence belongs to the UDP-N-acetylglucosamine 2-epimerase family. As to quaternary structure, homodimer.

It catalyses the reaction UDP-N-acetyl-alpha-D-glucosamine + H2O = aldehydo-N-acetyl-D-mannosamine + UDP + H(+). Functionally, catalyzes the conversion of UDP-N-acetylglucosamine (UDP-GlcNAc) to UDP and N-acetyl-D-mannosamine (ManNAc). This Neisseria meningitidis serogroup B (strain ATCC BAA-335 / MC58) protein is UDP-N-acetylglucosamine 2-epimerase (siaA).